Here is a 171-residue protein sequence, read N- to C-terminus: 3-hydroxydecanoyl-[acyl-carrier-protein] dehydratase (171 aa).

The active site involves histidine 70.

It belongs to the thioester dehydratase family. FabA subfamily. Homodimer.

Its subcellular location is the cytoplasm. It catalyses the reaction a (3R)-hydroxyacyl-[ACP] = a (2E)-enoyl-[ACP] + H2O. The enzyme catalyses (3R)-hydroxydecanoyl-[ACP] = (2E)-decenoyl-[ACP] + H2O. It carries out the reaction (2E)-decenoyl-[ACP] = (3Z)-decenoyl-[ACP]. It participates in lipid metabolism; fatty acid biosynthesis. Its function is as follows. Necessary for the introduction of cis unsaturation into fatty acids. Catalyzes the dehydration of (3R)-3-hydroxydecanoyl-ACP to E-(2)-decenoyl-ACP and then its isomerization to Z-(3)-decenoyl-ACP. Can catalyze the dehydratase reaction for beta-hydroxyacyl-ACPs with saturated chain lengths up to 16:0, being most active on intermediate chain length. The polypeptide is 3-hydroxydecanoyl-[acyl-carrier-protein] dehydratase (Pseudomonas putida (strain W619)).